The chain runs to 249 residues: Zinc finger protein CG30 (249 aa).

Residues 8 to 66 form an RING-type zinc finger; that stretch reads CHICCSVGEIKNYFLQPVDAITILPIVELHTCRHQLCVMCVRKIAQRGRDKRVECPMCR.

This is Zinc finger protein CG30 (CG30) from Orgyia pseudotsugata (Douglas-fir tussock moth).